Consider the following 183-residue polypeptide: Large ribosomal subunit protein uL6 (183 aa).

It belongs to the universal ribosomal protein uL6 family. In terms of assembly, part of the 50S ribosomal subunit.

Its function is as follows. This protein binds to the 23S rRNA, and is important in its secondary structure. It is located near the subunit interface in the base of the L7/L12 stalk, and near the tRNA binding site of the peptidyltransferase center. This Chlamydia trachomatis serovar A (strain ATCC VR-571B / DSM 19440 / HAR-13) protein is Large ribosomal subunit protein uL6.